Reading from the N-terminus, the 78-residue chain is Sec-independent protein translocase protein TatA (78 aa).

A helical membrane pass occupies residues 1–21 (MGSLSIWHWIVVIAVVLLLFG). The span at 43–60 (LQDDEKTAEKSEPVKSID) shows a compositional bias: basic and acidic residues. Residues 43–78 (LQDDEKTAEKSEPVKSIDHTSTPGATNRTDVGSKAV) are disordered. The segment covering 61–72 (HTSTPGATNRTD) has biased composition (polar residues).

It belongs to the TatA/E family. In terms of assembly, the Tat system comprises two distinct complexes: a TatABC complex, containing multiple copies of TatA, TatB and TatC subunits, and a separate TatA complex, containing only TatA subunits. Substrates initially bind to the TatABC complex, which probably triggers association of the separate TatA complex to form the active translocon.

It localises to the cell inner membrane. Part of the twin-arginine translocation (Tat) system that transports large folded proteins containing a characteristic twin-arginine motif in their signal peptide across membranes. TatA could form the protein-conducting channel of the Tat system. In Rhodopseudomonas palustris (strain ATCC BAA-98 / CGA009), this protein is Sec-independent protein translocase protein TatA.